Reading from the N-terminus, the 495-residue chain is Monoamine oxidase N (495 aa).

Polar residues predominate over residues 1 to 19 (MTSRDGYQWTPETGLTQGV). Positions 1–23 (MTSRDGYQWTPETGLTQGVPSLG) are disordered. The Microbody targeting signal signature appears at 493-495 (ARL).

This sequence belongs to the flavin monoamine oxidase family. FAD is required as a cofactor.

Its subcellular location is the peroxisome. The catalysed reaction is a secondary aliphatic amine + O2 + H2O = a primary amine + an aldehyde + H2O2. The sequence is that of Monoamine oxidase N (maoN) from Aspergillus niger.